Here is a 394-residue protein sequence, read N- to C-terminus: Dual-specificity RNA methyltransferase RlmN (394 aa).

Glutamate 92 acts as the Proton acceptor in catalysis. The region spanning 98-341 is the Radical SAM core domain; the sequence is ENDRGTLCIS…TTVRRTRGDD (244 aa). A disulfide bridge links cysteine 105 with cysteine 346. [4Fe-4S] cluster-binding residues include cysteine 112, cysteine 116, and cysteine 119. S-adenosyl-L-methionine is bound by residues 166–167, serine 198, 220–222, and asparagine 303; these read GE and SLH. Cysteine 346 serves as the catalytic S-methylcysteine intermediate. The tract at residues 374-394 is disordered; the sequence is DSAVQRRADAAPSGSATETTR.

This sequence belongs to the radical SAM superfamily. RlmN family. The cofactor is [4Fe-4S] cluster.

It localises to the cytoplasm. The enzyme catalyses adenosine(2503) in 23S rRNA + 2 reduced [2Fe-2S]-[ferredoxin] + 2 S-adenosyl-L-methionine = 2-methyladenosine(2503) in 23S rRNA + 5'-deoxyadenosine + L-methionine + 2 oxidized [2Fe-2S]-[ferredoxin] + S-adenosyl-L-homocysteine. The catalysed reaction is adenosine(37) in tRNA + 2 reduced [2Fe-2S]-[ferredoxin] + 2 S-adenosyl-L-methionine = 2-methyladenosine(37) in tRNA + 5'-deoxyadenosine + L-methionine + 2 oxidized [2Fe-2S]-[ferredoxin] + S-adenosyl-L-homocysteine. In terms of biological role, specifically methylates position 2 of adenine 2503 in 23S rRNA and position 2 of adenine 37 in tRNAs. m2A2503 modification seems to play a crucial role in the proofreading step occurring at the peptidyl transferase center and thus would serve to optimize ribosomal fidelity. This is Dual-specificity RNA methyltransferase RlmN from Methylibium petroleiphilum (strain ATCC BAA-1232 / LMG 22953 / PM1).